We begin with the raw amino-acid sequence, 713 residues long: MFNKHSVEIEWAGRPLKLETGKVARQADGAVIATYGETMVLATVVSAKSPKPGQDFFPLTVNYQEKTYAAGKIPGGYFKREGRPSEKETLVSRLIDRPIRPLFPEGYKNDTQVVVTVIQHDLENDPDVLSMVAASAALTLSGIPFMGPVGGARVGYINGEYVLNPHLDEMDESVLDLVVAGTQDAVLMVESEAKELNEEIMLGAVMFGHKGFQPVIDAIIKLAEVAAKEPREFEPEDFSALENEMLGLAETELRTAYKITEKAARYAAVDAVKTKVKAHFLPEEGEAKYSPEEIGAVFKHLQAKIVRWNVLDTKSRIDGRDLSTVRPIVSEVGILPRTHGSALFTRGETQAIVVATLGTGEDEQYVDSLTGMYKERFLLHYNFPPYSVGETGRMGSPGRREIGHGKLAWRAIRPMLPTAEQFPYTLRVVSEITESNGSSSMATVCGTSLALMDAGVPLAKPVAGIAMGLILEGERFAVLSDILGDEDHLGDMDFKVAGTADGITSLQMDIKIAGITEEIMKIALEQAQGGRKHILGEMANAITESRGQLGEFAPRIEVMNIPVDKIREVIGSGGKVIREIVEKTGAKINIEDDGTVKIASASGKEIEAARKWIHSIVAEPEVGQIYEGTVVKTADFGAFVNFFGARDGLVHISQLASERVAKTSDVVKEGDKVWVKLMGFDERGKVRLSMKVVDQATGKEVAADKKDGEAAAE.

Residues Asp-487 and Asp-493 each contribute to the Mg(2+) site. The KH domain maps to 554–613 (PRIEVMNIPVDKIREVIGSGGKVIREIVEKTGAKINIEDDGTVKIASASGKEIEAARKWI). Positions 623-691 (GQIYEGTVVK…ERGKVRLSMK (69 aa)) constitute an S1 motif domain.

It belongs to the polyribonucleotide nucleotidyltransferase family. Mg(2+) serves as cofactor.

The protein localises to the cytoplasm. The catalysed reaction is RNA(n+1) + phosphate = RNA(n) + a ribonucleoside 5'-diphosphate. Its function is as follows. Involved in mRNA degradation. Catalyzes the phosphorolysis of single-stranded polyribonucleotides processively in the 3'- to 5'-direction. The polypeptide is Polyribonucleotide nucleotidyltransferase (Agrobacterium fabrum (strain C58 / ATCC 33970) (Agrobacterium tumefaciens (strain C58))).